Consider the following 153-residue polypeptide: Superoxide dismutase [Cu-Zn] (153 aa).

Cu cation-binding residues include H45, H47, and H62. C56 and C145 form a disulfide bridge. 4 residues coordinate Zn(2+): H62, H70, H79, and D82. H119 is a binding site for Cu cation.

It belongs to the Cu-Zn superoxide dismutase family. Homodimer. Cu cation serves as cofactor. It depends on Zn(2+) as a cofactor.

It localises to the cytoplasm. The catalysed reaction is 2 superoxide + 2 H(+) = H2O2 + O2. In terms of biological role, destroys radicals which are normally produced within the cells and which are toxic to biological systems. This is Superoxide dismutase [Cu-Zn] from Drosophila erecta (Fruit fly).